A 165-amino-acid polypeptide reads, in one-letter code: Large ribosomal subunit protein uL10 (165 aa).

It belongs to the universal ribosomal protein uL10 family. In terms of assembly, part of the ribosomal stalk of the 50S ribosomal subunit. The N-terminus interacts with L11 and the large rRNA to form the base of the stalk. The C-terminus forms an elongated spine to which L12 dimers bind in a sequential fashion forming a multimeric L10(L12)X complex.

In terms of biological role, forms part of the ribosomal stalk, playing a central role in the interaction of the ribosome with GTP-bound translation factors. The sequence is that of Large ribosomal subunit protein uL10 from Edwardsiella ictaluri (strain 93-146).